Consider the following 178-residue polypeptide: Cytochrome b6-f complex iron-sulfur subunit 2 (178 aa).

A helical transmembrane segment spans residues 17-36 (LLNFFTGAIVATTASAAIYP). In terms of domain architecture, Rieske spans 61-161 (GHPIPASQIL…VQVKDDYIWI (101 aa)). [2Fe-2S] cluster is bound by residues Cys-107, His-109, Cys-125, and His-128. Cys-112 and Cys-127 are disulfide-bonded.

It belongs to the Rieske iron-sulfur protein family. In terms of assembly, the 4 large subunits of the cytochrome b6-f complex are cytochrome b6, subunit IV (17 kDa polypeptide, PetD), cytochrome f and the Rieske protein, while the 4 small subunits are PetG, PetL, PetM and PetN. The complex functions as a dimer. Requires [2Fe-2S] cluster as cofactor.

It localises to the cellular thylakoid membrane. It carries out the reaction 2 oxidized [plastocyanin] + a plastoquinol + 2 H(+)(in) = 2 reduced [plastocyanin] + a plastoquinone + 4 H(+)(out). In terms of biological role, component of the cytochrome b6-f complex, which mediates electron transfer between photosystem II (PSII) and photosystem I (PSI), cyclic electron flow around PSI, and state transitions. This chain is Cytochrome b6-f complex iron-sulfur subunit 2, found in Nostoc sp. (strain PCC 7120 / SAG 25.82 / UTEX 2576).